We begin with the raw amino-acid sequence, 215 residues long: UPF0502 protein YceH (215 aa).

Belongs to the UPF0502 family.

This chain is UPF0502 protein YceH, found in Salmonella paratyphi A (strain ATCC 9150 / SARB42).